The chain runs to 102 residues: Protein RnfH (102 aa).

This sequence belongs to the UPF0125 (RnfH) family.

The protein is Protein RnfH of Haemophilus influenzae (strain PittEE).